Consider the following 204-residue polypeptide: Regulatory protein RecX (204 aa).

Residues 1–22 (MTKSSRPQSISDSVSVAGSQGT) show a composition bias toward polar residues. The interval 1 to 44 (MTKSSRPQSISDSVSVAGSQGTLDDLRARVASVPEAPTREPVDS) is disordered.

The protein belongs to the RecX family.

It is found in the cytoplasm. Functionally, modulates RecA activity. This chain is Regulatory protein RecX, found in Mycobacteroides abscessus (strain ATCC 19977 / DSM 44196 / CCUG 20993 / CIP 104536 / JCM 13569 / NCTC 13031 / TMC 1543 / L948) (Mycobacterium abscessus).